The sequence spans 461 residues: tRNA (guanine(10)-N(2))-methyltransferase TRMT11 (461 aa).

This sequence belongs to the class I-like SAM-binding methyltransferase superfamily. TRM11 methyltransferase family. In terms of assembly, part of the heterodimeric TRMT11-TRM112 methyltransferase complex; this complex forms an active tRNA methyltransferase, where TRMT112 acts as an activator of the catalytic subunit TRMT11.

Its subcellular location is the cytoplasm. The enzyme catalyses guanosine(10) in tRNA + S-adenosyl-L-methionine = N(2)-methylguanosine(10) in tRNA + S-adenosyl-L-homocysteine + H(+). Catalytic subunit of the TRMT11-TRM112 methyltransferase complex, that specifically mediates the S-adenosyl-L-methionine-dependent N(2)-methylation of guanosine nucleotide at position 10 (m2G10) in tRNAs. This is one of the major tRNA (guanine-N(2))-methyltransferases. This is tRNA (guanine(10)-N(2))-methyltransferase TRMT11 from Gallus gallus (Chicken).